Consider the following 108-residue polypeptide: Translation initiation factor 1A (108 aa).

The S1-like domain occupies 11-85; that stretch reads PSRDVPKPEE…NRCDILYKYG (75 aa).

Belongs to the eIF-1A family.

Its function is as follows. Seems to be required for maximal rate of protein biosynthesis. Enhances ribosome dissociation into subunits and stabilizes the binding of the initiator Met-tRNA(I) to 40 S ribosomal subunits. This Saccharolobus islandicus (strain Y.N.15.51 / Yellowstone #2) (Sulfolobus islandicus) protein is Translation initiation factor 1A (eIF1A).